The sequence spans 279 residues: Phosphate import ATP-binding protein PstB (279 aa).

In terms of domain architecture, ABC transporter spans 33–274; the sequence is LDINKLNLFY…PLKKKTEDYI (242 aa). 65-72 lines the ATP pocket; sequence GPSGCGKS.

This sequence belongs to the ABC transporter superfamily. Phosphate importer (TC 3.A.1.7) family. As to quaternary structure, the complex is composed of two ATP-binding proteins (PstB), two transmembrane proteins (PstC and PstA) and a solute-binding protein (PstS).

It is found in the cell inner membrane. The enzyme catalyses phosphate(out) + ATP + H2O = ADP + 2 phosphate(in) + H(+). Its function is as follows. Part of the ABC transporter complex PstSACB involved in phosphate import. Responsible for energy coupling to the transport system. This chain is Phosphate import ATP-binding protein PstB, found in Colwellia psychrerythraea (strain 34H / ATCC BAA-681) (Vibrio psychroerythus).